We begin with the raw amino-acid sequence, 1153 residues long: uncharacterized protein (1153 aa).

Disordered stretches follow at residues 164–193 (TTIK…QIDD), 224–245 (DNYD…DDDK), 294–316 (KSPQ…QSKH), 332–427 (EHKL…KNKK), 613–648 (LSML…EGEN), 683–703 (QQQQ…EEMS), 717–740 (KSDD…SKRK), 772–819 (NKKL…KTIE), 838–874 (ASSG…EDEK), and 942–1106 (NNNN…NNEV). A compositionally biased stretch (pro residues) spans 169–179 (LPPPLPQPQPQ). Composition is skewed to low complexity over residues 231–240 (NNNNNNNNSN), 298–312 (KLKL…QQQK), 336–391 (QQQQ…TPKK), and 399–423 (NNVN…NNNN). Residues 613 to 625 (LSMLDSTNDGSSQ) show a composition bias toward polar residues. Residues 687–699 (QEKEKQQQEKQQD) are compositionally biased toward basic and acidic residues. Residues 721–734 (NNNNNDNNNNNNNN) show a composition bias toward low complexity. The segment covering 772–784 (NKKLRVDSEDQQT) has biased composition (basic and acidic residues). Composition is skewed to low complexity over residues 788–808 (TTTT…NNNN) and 839–854 (SSGG…QNDS). Residues 856–874 (TTKEKERSETIKTHNEDEK) are compositionally biased toward basic and acidic residues. Low complexity predominate over residues 942–987 (NNNNNNNNNINNINNIGNKNTTVNNSNHSNHSNNNINNNNIFKNSN). 2 stretches are compositionally biased toward polar residues: residues 988 to 998 (PIVDTNFSSTT) and 1005 to 1015 (QSKIFTGNQLP). Low complexity predominate over residues 1019–1059 (INNENVVNNNNNNEINNTTTTTTNNNSGIHKNNNNYNSDNS). The span at 1064 to 1081 (DGLKQEKEEQKEEQKENK) shows a compositional bias: basic and acidic residues. Residues 1082-1105 (NNNNNNNNNNNNNNNNNNNNNNNE) show a composition bias toward low complexity.

This is an uncharacterized protein from Dictyostelium discoideum (Social amoeba).